Consider the following 338-residue polypeptide: tRNA N6-adenosine threonylcarbamoyltransferase (338 aa).

Positions 114 and 118 each coordinate Fe cation. Residues Leu-136–Gly-140, Asp-169, Gly-182, Asp-186, and Asn-275 contribute to the substrate site. Position 301 (Asp-301) interacts with Fe cation.

This sequence belongs to the KAE1 / TsaD family. Requires Fe(2+) as cofactor.

Its subcellular location is the cytoplasm. It carries out the reaction L-threonylcarbamoyladenylate + adenosine(37) in tRNA = N(6)-L-threonylcarbamoyladenosine(37) in tRNA + AMP + H(+). Its function is as follows. Required for the formation of a threonylcarbamoyl group on adenosine at position 37 (t(6)A37) in tRNAs that read codons beginning with adenine. Is involved in the transfer of the threonylcarbamoyl moiety of threonylcarbamoyl-AMP (TC-AMP) to the N6 group of A37, together with TsaE and TsaB. TsaD likely plays a direct catalytic role in this reaction. The sequence is that of tRNA N6-adenosine threonylcarbamoyltransferase from Streptococcus equi subsp. zooepidemicus (strain MGCS10565).